A 631-amino-acid polypeptide reads, in one-letter code: Extracellular metalloproteinase mep (631 aa).

A signal peptide spans 1-19 (MHGLRLVCSIGTLPLVILA). Residues 20-241 (YPAASLHTTS…VHGVVDYVAD (222 aa)) constitute a propeptide that is removed on maturation. Asparagine 282, asparagine 332, and asparagine 364 each carry an N-linked (GlcNAc...) asparagine glycan. Histidine 425 contributes to the Zn(2+) binding site. Glutamate 426 is an active-site residue. Histidine 429 lines the Zn(2+) pocket. Residues asparagine 470 and asparagine 505 are each glycosylated (N-linked (GlcNAc...) asparagine).

The protein belongs to the peptidase M36 family. The cofactor is Zn(2+).

The protein localises to the secreted. Its function is as follows. Secreted metalloproteinase that allows assimilation of proteinaceous substrates. In Aspergillus niger (strain ATCC MYA-4892 / CBS 513.88 / FGSC A1513), this protein is Extracellular metalloproteinase mep (mep).